Reading from the N-terminus, the 510-residue chain is 2-isopropylmalate synthase (510 aa).

The Pyruvate carboxyltransferase domain occupies 5–267 (LVIFDTTLRD…DTRIDTTQIV (263 aa)). Mn(2+)-binding residues include aspartate 14, histidine 202, histidine 204, and asparagine 238. Residues 392–510 (RLLSLVAHSE…SSLERTHPQV (119 aa)) form a regulatory domain region.

The protein belongs to the alpha-IPM synthase/homocitrate synthase family. LeuA type 1 subfamily. As to quaternary structure, homodimer. Requires Mn(2+) as cofactor.

It is found in the cytoplasm. It catalyses the reaction 3-methyl-2-oxobutanoate + acetyl-CoA + H2O = (2S)-2-isopropylmalate + CoA + H(+). It participates in amino-acid biosynthesis; L-leucine biosynthesis; L-leucine from 3-methyl-2-oxobutanoate: step 1/4. Functionally, catalyzes the condensation of the acetyl group of acetyl-CoA with 3-methyl-2-oxobutanoate (2-ketoisovalerate) to form 3-carboxy-3-hydroxy-4-methylpentanoate (2-isopropylmalate). The chain is 2-isopropylmalate synthase from Nitrosomonas eutropha (strain DSM 101675 / C91 / Nm57).